A 215-amino-acid chain; its full sequence is Pentapeptide repeat protein QnrB4 (215 aa).

Pentapeptide repeat domains follow at residues Thr-25–Asn-104 and Ile-117–Asp-191.

Belongs to the pentapeptide repeat protein family.

Probably plays a role in resistance to quinolone antibiotics. Only inhibits ATP-dependent DNA supercoiling by E.coli gyrase at high concentration (30 uM). Protects E.coli gyrase supercoiling activity from inhibition by fluoroquinolones (ciprofloxacin) at 0.1 uM, does not protect M.tuberculosis gyrase activity. In Escherichia coli, this protein is Pentapeptide repeat protein QnrB4.